We begin with the raw amino-acid sequence, 449 residues long: Aspartate aminotransferase 3, chloroplastic (449 aa).

Residues 1–43 (MKTTHFSSSSSSDRRIGALLRHLNSGSDSDNLSSLYASPTSGG) constitute a chloroplast transit peptide. 3 residues coordinate L-aspartate: G81, W178, and N231. K295 bears the N6-(pyridoxal phosphate)lysine mark. An L-aspartate-binding site is contributed by R423.

This sequence belongs to the class-I pyridoxal-phosphate-dependent aminotransferase family. As to quaternary structure, homodimer. Pyridoxal 5'-phosphate is required as a cofactor. Expressed in roots, cauline leaves, flowers, hypocotyl epidermis and root hair cells.

The protein localises to the plastid. It is found in the chloroplast. It catalyses the reaction L-aspartate + 2-oxoglutarate = oxaloacetate + L-glutamate. Its function is as follows. Amino acid aminotransferase important for the metabolism of amino acids and Krebs-cycle related organic acids. No activity with D-Asp or D-Ala as amino donors. In plants, it is involved in nitrogen metabolism and in aspects of carbon and energy metabolism. This is Aspartate aminotransferase 3, chloroplastic (ASP3) from Arabidopsis thaliana (Mouse-ear cress).